Consider the following 330-residue polypeptide: N-acetyl-gamma-glutamyl-phosphate reductase (330 aa).

The active site involves Cys143.

This sequence belongs to the NAGSA dehydrogenase family. Type 1 subfamily.

The protein resides in the cytoplasm. It carries out the reaction N-acetyl-L-glutamate 5-semialdehyde + phosphate + NADP(+) = N-acetyl-L-glutamyl 5-phosphate + NADPH + H(+). Its pathway is amino-acid biosynthesis; L-arginine biosynthesis; N(2)-acetyl-L-ornithine from L-glutamate: step 3/4. In terms of biological role, catalyzes the NADPH-dependent reduction of N-acetyl-5-glutamyl phosphate to yield N-acetyl-L-glutamate 5-semialdehyde. This is N-acetyl-gamma-glutamyl-phosphate reductase from Methanocorpusculum labreanum (strain ATCC 43576 / DSM 4855 / Z).